The primary structure comprises 529 residues: Cytochrome P450 monooxygenase 45 (529 aa).

The chain crosses the membrane as a helical span at residues 24–44 (VLTICILALLTFVLREIVLYF). Residues asparagine 185 and asparagine 322 are each glycosylated (N-linked (GlcNAc...) asparagine). Cysteine 454 serves as a coordination point for heme.

The protein belongs to the cytochrome P450 family. Heme serves as cofactor.

It localises to the membrane. It functions in the pathway secondary metabolite biosynthesis. Functionally, cytochrome P450 monooxygenase that is able to use trans-stilbene as a substrate for oxidation. The polypeptide is Cytochrome P450 monooxygenase 45 (Postia placenta (strain ATCC 44394 / Madison 698-R) (Brown rot fungus)).